The following is a 150-amino-acid chain: Catabolic 3-dehydroquinase 2 (150 aa).

Y23 functions as the Proton acceptor in the catalytic mechanism. Substrate-binding residues include N74, H80, and D87. H100 functions as the Proton donor in the catalytic mechanism. Substrate is bound by residues 101–102 and R111; that span reads IT.

Belongs to the type-II 3-dehydroquinase family. As to quaternary structure, homododecamer. Adopts a ring-like structure, composed of an arrangement of two hexameric rings stacked on top of one another.

It catalyses the reaction 3-dehydroquinate = 3-dehydroshikimate + H2O. The protein operates within aromatic compound metabolism; 3,4-dihydroxybenzoate biosynthesis; 3,4-dihydroxybenzoate from 3-dehydroquinate: step 1/2. Its function is as follows. Is involved in the catabolism of quinate. Allows the utilization of quinate as carbon source via the beta-ketoadipate pathway. The sequence is that of Catabolic 3-dehydroquinase 2 from Aspergillus fumigatus (strain ATCC MYA-4609 / CBS 101355 / FGSC A1100 / Af293) (Neosartorya fumigata).